We begin with the raw amino-acid sequence, 337 residues long: GTPase Obg (337 aa).

Residues 1–158 (MFVDRVIIEL…HHIELELKLI (158 aa)) enclose the Obg domain. Residues 159 to 330 (ADVGLVGFPN…LIEKMTQRLS (172 aa)) enclose the OBG-type G domain. GTP-binding positions include 165–172 (GFPNAGKS), 190–194 (FTTLQ), 212–215 (DIPG), 282–285 (NKID), and 311–313 (SAV). Residues S172 and T192 each contribute to the Mg(2+) site.

The protein belongs to the TRAFAC class OBG-HflX-like GTPase superfamily. OBG GTPase family. In terms of assembly, monomer. The cofactor is Mg(2+).

The protein localises to the cytoplasm. Functionally, an essential GTPase which binds GTP, GDP and possibly (p)ppGpp with moderate affinity, with high nucleotide exchange rates and a fairly low GTP hydrolysis rate. Plays a role in control of the cell cycle, stress response, ribosome biogenesis and in those bacteria that undergo differentiation, in morphogenesis control. In Protochlamydia amoebophila (strain UWE25), this protein is GTPase Obg.